The following is a 285-amino-acid chain: N(G),N(G)-dimethylarginine dimethylaminohydrolase 1 (285 aa).

Alanine 2 carries the post-translational modification N-acetylalanine. Leucine 30 contacts substrate. Serine 33 bears the Phosphoserine mark. Aspartate 73, glutamate 78, aspartate 79, arginine 98, and arginine 145 together coordinate substrate. The Proton donor role is filled by histidine 173. Cysteine 222 bears the S-nitrosocysteine mark. Residue valine 268 coordinates substrate. The residue at position 274 (cysteine 274) is an S-nitrosocysteine. Cysteine 274 serves as the catalytic Nucleophile. Zn(2+) is bound at residue cysteine 274.

Belongs to the DDAH family. As to quaternary structure, monomer. As to expression, detected in red blood cells (at protein level). Widely distributed, high amounts found in kidney, brain, aorta and pancreas.

It carries out the reaction N(omega),N(omega)-dimethyl-L-arginine + H2O = dimethylamine + L-citrulline. The catalysed reaction is N(omega)-methyl-L-arginine + H2O = L-citrulline + methylamine. Its activity is regulated as follows. Inhibited by zinc ions. Hydrolyzes N(G),N(G)-dimethyl-L-arginine (ADMA) and N(G)-monomethyl-L-arginine (MMA) which act as inhibitors of NOS. Has therefore a role in the regulation of nitric oxide generation. The sequence is that of N(G),N(G)-dimethylarginine dimethylaminohydrolase 1 (Ddah1) from Rattus norvegicus (Rat).